Reading from the N-terminus, the 544-residue chain is Probable protein kinase UbiB (544 aa).

A helical transmembrane segment spans residues 1-21 (MIFGELRRLYLIIGVMLSYGL). The Protein kinase domain maps to 123 to 500 (DFQQEPLASA…HVRQSQSRFL (378 aa)). ATP contacts are provided by residues 129–137 (LASASIAQV) and lysine 151. Aspartate 286 serves as the catalytic Proton acceptor. Transmembrane regions (helical) follow at residues 499 to 519 (FLFG…TQGA) and 520 to 540 (DEGS…IIGW).

The protein belongs to the ABC1 family. UbiB subfamily.

It localises to the cell inner membrane. The protein operates within cofactor biosynthesis; ubiquinone biosynthesis [regulation]. Its function is as follows. Is probably a protein kinase regulator of UbiI activity which is involved in aerobic coenzyme Q (ubiquinone) biosynthesis. The chain is Probable protein kinase UbiB from Sodalis glossinidius (strain morsitans).